Consider the following 302-residue polypeptide: 1D-myo-inositol 2-acetamido-2-deoxy-alpha-D-glucopyranoside deacetylase (302 aa).

Positions 13, 16, and 155 each coordinate Zn(2+).

This sequence belongs to the MshB deacetylase family. Zn(2+) serves as cofactor.

It carries out the reaction 1D-myo-inositol 2-acetamido-2-deoxy-alpha-D-glucopyranoside + H2O = 1D-myo-inositol 2-amino-2-deoxy-alpha-D-glucopyranoside + acetate. In terms of biological role, catalyzes the deacetylation of 1D-myo-inositol 2-acetamido-2-deoxy-alpha-D-glucopyranoside (GlcNAc-Ins) in the mycothiol biosynthesis pathway. The polypeptide is 1D-myo-inositol 2-acetamido-2-deoxy-alpha-D-glucopyranoside deacetylase (Nocardioides sp. (strain ATCC BAA-499 / JS614)).